A 673-amino-acid chain; its full sequence is MALARANSPQEALLWALNDLEENSFKTLKFHLRDVTQFHLARGELESLSQVDLASKLISMYGAQEAVRVVSRSLLAMNLMELVDYLNQVCLNDYREIYREHVRCLEERQDWGVNSSHNKLLLMATSSSGGRRSPSCSDLEQELDPVDVETLFAPEAESYSTPPIVVMQGSAGTGKTTLVKKLVQDWSKGKLYPGQFDYVFYVSCREVVLLPKCDLPNLICWCCGDDQAPVTEILRQPGRLLFILDGYDELQKSSRAECVLHILMRRREVPCSLLITTRPPALQSLEPMLGERRHVLVLGFSEEERETYFSSCFTDKEQLKNALEFVQNNAVLYKACQVPGICWVVCSWLKKKMARGQEVSETPSNSTDIFTAYVSTFLPTDGNGDSSELTRHKVLKSLCSLAAEGMRHQRLLFEEEVLRKHGLDGPSLTAFLNCIDYRAGLGIKKFYSFRHISFQEFFYAMSFLVKEDQSQQGEATHKEVAKLVDPENHEEVTLSLQFLFDMLKTEGTLSLGLKFCFRIAPSVRQDLKHFKEQIEAIKYKRSWDLEFSLYDSKIKKLTQGIQMKDVILNVQHLDEKKSDKKKSVSVTSSFSSGKVQSPFLGNDKSTRKQKKASNGKSRGAEEPAPGVRNRRLASREKGHMEMNDKEDGGVEEQEDEEGQTLKKDGEMIDKMNG.

In terms of domain architecture, Pyrin spans 1–92; it reads MALARANSPQ…VDYLNQVCLN (92 aa). Residues 163-469 form the NACHT domain; sequence PIVVMQGSAG…AMSFLVKEDQ (307 aa). 169 to 176 lines the ATP pocket; the sequence is GSAGTGKT. Residues 578–673 are disordered; it reads SDKKKSVSVT…DGEMIDKMNG (96 aa). Low complexity predominate over residues 584–597; the sequence is VSVTSSFSSGKVQS. Over residues 633–648 the composition is skewed to basic and acidic residues; the sequence is ASREKGHMEMNDKEDG. A compositionally biased stretch (acidic residues) spans 649-658; it reads GVEEQEDEEG. Positions 659-673 are enriched in basic and acidic residues; sequence QTLKKDGEMIDKMNG.

This sequence belongs to the NLRP family. As to quaternary structure, oligomerizes. Interacts with PYCARD. Also interacts with CASP1 and IL1B. Interacts with NOD1 and components of the NOD1 signaling pathway including RIPK2, NR2C2/TAK1 and IKBKG/NEMO. In terms of tissue distribution, expressed in skin, tongue, heart, colon and several cell lines of hematopoietic and myocytic origin but not in kidney, skeletal muscle, spleen, liver, lung, thymus, brain or small intestine (at protein level).

The protein localises to the cytoplasm. It is found in the cell membrane. In terms of biological role, inhibits autoprocessing of CASP1, CASP1-dependent IL1B secretion, PYCARD aggregation and PYCARD-mediated apoptosis but not apoptosis induced by FAS or BID. Displays anti-inflammatory activity. Required for immunity against C.albicans infection. Involved in the innate immune response by contributing to pro-inflammatory cytokine release in response to invasive bacterial infection. Contributes to T-cell-mediated inflammatory responses in the skin. Plays a role in protection against periodontitis through its involvement in induction of IL1A via ERK activation in oral epithelial cells infected with periodontal pathogens. Exhibits both ATPase and GTPase activities. In Mus musculus (Mouse), this protein is NACHT, LRR and PYD domains-containing protein 10 (Nlrp10).